Here is an 88-residue protein sequence, read N- to C-terminus: C-C motif chemokine 18 (88 aa).

An N-terminal signal peptide occupies residues 1–19 (MKGLAAALLVLCTVALCSC). 2 cysteine pairs are disulfide-bonded: Cys-29-Cys-53 and Cys-30-Cys-69.

Belongs to the intercrine beta (chemokine CC) family. The Cys-29/Cys-53 disulfide bond is required for activity.

Its subcellular location is the secreted. Its function is as follows. Chemotactic factor that attracts lymphocytes but not monocytes or granulocytes. May be involved in B-cell migration into B-cell follicles in lymph nodes. Attracts naive T-lymphocytes toward dendritic cells and activated macrophages in lymph nodes, has chemotactic activity for naive T-cells, CD4+ and CD8+ T-cells and thus may play a role in both humoral and cell-mediated immunity responses. This Macaca mulatta (Rhesus macaque) protein is C-C motif chemokine 18 (CCL18).